A 426-amino-acid polypeptide reads, in one-letter code: MLDIKQIRENPQLIQERLNSRSGTYDIQPILQLDKQQRELEATRSQIQARSNEIGKIVGQKIKSGINPQDPEIQALRDEGNSIKAQLSELEPREKELKAEIEQLILALPNLPSDSTPIGKSEEENVEVRRWGDEYLPQNPNIIPHWEIGEKLGILNFERAVKVAQSRFVNLIGAGAALERALINFMLKTQTVAGYVEVSPPLLVNTDSLTGTGQLPKFAEESFKCADDELWLIPTAEVPVTNLYRGEILAAENLPIYHCAYTPCFRREAGSYGRDMRGLIRLHQFNKVELVKVVHPSTSFDELEKLVGNAEAILQALKLPYRVINLCTGDLGFGATKTYDLEVWLPSSGKYREISSCSNCFDFQARRADIRFKEAGKKGTQFVHTLNGSGLAVGRTMAAILENYQQPDGTILIPEVLQVYLGREVL.

235 to 237 is a binding site for L-serine; that stretch reads TAE. ATP is bound at residue 266–268; that stretch reads RRE. Glu-289 contributes to the L-serine binding site. ATP is bound at residue 353–356; the sequence is EISS. L-serine is bound at residue Ser-389.

It belongs to the class-II aminoacyl-tRNA synthetase family. Type-1 seryl-tRNA synthetase subfamily. Homodimer. The tRNA molecule binds across the dimer.

It is found in the cytoplasm. It carries out the reaction tRNA(Ser) + L-serine + ATP = L-seryl-tRNA(Ser) + AMP + diphosphate + H(+). The catalysed reaction is tRNA(Sec) + L-serine + ATP = L-seryl-tRNA(Sec) + AMP + diphosphate + H(+). Its pathway is aminoacyl-tRNA biosynthesis; selenocysteinyl-tRNA(Sec) biosynthesis; L-seryl-tRNA(Sec) from L-serine and tRNA(Sec): step 1/1. Its function is as follows. Catalyzes the attachment of serine to tRNA(Ser). Is also able to aminoacylate tRNA(Sec) with serine, to form the misacylated tRNA L-seryl-tRNA(Sec), which will be further converted into selenocysteinyl-tRNA(Sec). This is Serine--tRNA ligase from Trichormus variabilis (strain ATCC 29413 / PCC 7937) (Anabaena variabilis).